We begin with the raw amino-acid sequence, 190 residues long: Cancer-related nucleoside-triphosphatase homolog (190 aa).

Residues 9-16 and 109-116 contribute to the ATP site; these read GPPGVGKT and VCIIDEIG. At K165 the chain carries N6-acetyllysine.

It belongs to the THEP1 NTPase family. Monomer.

The enzyme catalyses a ribonucleoside 5'-triphosphate + H2O = a ribonucleoside 5'-diphosphate + phosphate + H(+). It carries out the reaction 5-methyl-UTP + H2O = 5-methyl-UDP + phosphate + H(+). The catalysed reaction is CTP + H2O = CDP + phosphate + H(+). It catalyses the reaction ATP + H2O = ADP + phosphate + H(+). The enzyme catalyses GTP + H2O = GDP + phosphate + H(+). In terms of biological role, has nucleotide phosphatase activity towards ATP, GTP, CTP, TTP and UTP. Hydrolyzes nucleoside diphosphates with lower efficiency. This is Cancer-related nucleoside-triphosphatase homolog from Mus musculus (Mouse).